The primary structure comprises 227 residues: PKHD-type hydroxylase A1S_0473 (227 aa).

The region spanning Lys78 to Ser178 is the Fe2OG dioxygenase domain. His96, Asp98, and His159 together coordinate Fe cation. Arg169 serves as a coordination point for 2-oxoglutarate.

Requires Fe(2+) as cofactor. The cofactor is L-ascorbate.

The sequence is that of PKHD-type hydroxylase A1S_0473 from Acinetobacter baumannii (strain ATCC 17978 / DSM 105126 / CIP 53.77 / LMG 1025 / NCDC KC755 / 5377).